Reading from the N-terminus, the 266-residue chain is Putative carbamate hydrolase RutD (266 aa).

Residues 14 to 115 enclose the AB hydrolase-1 domain; it reads PVVVLISGLG…TMLVSVNGWL (102 aa).

It belongs to the AB hydrolase superfamily. Hydrolase RutD family.

The enzyme catalyses carbamate + 2 H(+) = NH4(+) + CO2. In terms of biological role, involved in pyrimidine catabolism. May facilitate the hydrolysis of carbamate, a reaction that can also occur spontaneously. The polypeptide is Putative carbamate hydrolase RutD (Shigella flexneri serotype 5b (strain 8401)).